Here is a 238-residue protein sequence, read N- to C-terminus: Probable transcriptional regulatory protein SPD_1725 (238 aa).

The protein belongs to the TACO1 family. YeeN subfamily.

The protein localises to the cytoplasm. This chain is Probable transcriptional regulatory protein SPD_1725, found in Streptococcus pneumoniae serotype 2 (strain D39 / NCTC 7466).